The sequence spans 332 residues: 4-hydroxythreonine-4-phosphate dehydrogenase (332 aa).

2 residues coordinate substrate: His136 and Thr137. Positions 166, 211, and 266 each coordinate a divalent metal cation. Residues Lys274, Asn283, and Arg292 each coordinate substrate.

This sequence belongs to the PdxA family. In terms of assembly, homodimer. It depends on Zn(2+) as a cofactor. Requires Mg(2+) as cofactor. Co(2+) serves as cofactor.

It localises to the cytoplasm. The enzyme catalyses 4-(phosphooxy)-L-threonine + NAD(+) = 3-amino-2-oxopropyl phosphate + CO2 + NADH. The protein operates within cofactor biosynthesis; pyridoxine 5'-phosphate biosynthesis; pyridoxine 5'-phosphate from D-erythrose 4-phosphate: step 4/5. In terms of biological role, catalyzes the NAD(P)-dependent oxidation of 4-(phosphooxy)-L-threonine (HTP) into 2-amino-3-oxo-4-(phosphooxy)butyric acid which spontaneously decarboxylates to form 3-amino-2-oxopropyl phosphate (AHAP). This chain is 4-hydroxythreonine-4-phosphate dehydrogenase, found in Wigglesworthia glossinidia brevipalpis.